Consider the following 266-residue polypeptide: Receptor-like protein 5 (266 aa).

The signal sequence occupies residues 1–19 (MINYRHIVFCLCVMVVVDS). The Extracellular portion of the chain corresponds to 20–169 (RLTPYLAAIE…PTRNKNKPTV (150 aa)). LRR repeat units lie at residues 93–117 (LTSLRVIDLSHNRLKCTIPFEITKL) and 119–143 (NLTIVDVSYNQLHGEVPRVRGIVIL). N-linked (GlcNAc...) asparagine glycosylation occurs at Asn-119. Residues 170-190 (LVLLLGILVGLVVAGGASFGF) form a helical membrane-spanning segment. Residues 191 to 266 (YLYRIRKQPK…TNQNPHLPYM (76 aa)) are Cytoplasmic-facing.

This sequence belongs to the RLP family.

It localises to the cell membrane. This is Receptor-like protein 5 from Arabidopsis thaliana (Mouse-ear cress).